A 158-amino-acid chain; its full sequence is Phosphopantetheine adenylyltransferase (158 aa).

T8 contributes to the substrate binding site. Residues 8 to 9 (TF) and H16 each bind ATP. 3 residues coordinate substrate: K40, L72, and R86. Residues 87-89 (GLR), E97, and 122-128 (HAFISSS) each bind ATP.

This sequence belongs to the bacterial CoaD family. Homohexamer. It depends on Mg(2+) as a cofactor.

Its subcellular location is the cytoplasm. The catalysed reaction is (R)-4'-phosphopantetheine + ATP + H(+) = 3'-dephospho-CoA + diphosphate. Its pathway is cofactor biosynthesis; coenzyme A biosynthesis; CoA from (R)-pantothenate: step 4/5. Its function is as follows. Reversibly transfers an adenylyl group from ATP to 4'-phosphopantetheine, yielding dephospho-CoA (dPCoA) and pyrophosphate. The chain is Phosphopantetheine adenylyltransferase from Campylobacter jejuni subsp. jejuni serotype O:6 (strain 81116 / NCTC 11828).